We begin with the raw amino-acid sequence, 150 residues long: FAD synthase (150 aa).

ATP-binding positions include 8-9, 13-16, Asp-95, and His-122; these read AF and HPGH.

The protein belongs to the archaeal FAD synthase family. Homodimer. A divalent metal cation is required as a cofactor.

It catalyses the reaction FMN + ATP + H(+) = FAD + diphosphate. The protein operates within cofactor biosynthesis; FAD biosynthesis; FAD from FMN: step 1/1. Functionally, catalyzes the transfer of the AMP portion of ATP to flavin mononucleotide (FMN) to produce flavin adenine dinucleotide (FAD) coenzyme. The protein is FAD synthase of Methanobrevibacter ruminantium (strain ATCC 35063 / DSM 1093 / JCM 13430 / OCM 146 / M1) (Methanobacterium ruminantium).